The chain runs to 443 residues: ATP-dependent protease ATPase subunit HslU (443 aa).

ATP contacts are provided by residues Ile18 and 60–65 (GVGKTE). The disordered stretch occupies residues 139-161 (ARDSGFDANPSEENNATRQKFRK). The ATP site is built by Asp256, Glu321, and Arg393.

This sequence belongs to the ClpX chaperone family. HslU subfamily. In terms of assembly, a double ring-shaped homohexamer of HslV is capped on each side by a ring-shaped HslU homohexamer. The assembly of the HslU/HslV complex is dependent on binding of ATP.

The protein resides in the cytoplasm. ATPase subunit of a proteasome-like degradation complex; this subunit has chaperone activity. The binding of ATP and its subsequent hydrolysis by HslU are essential for unfolding of protein substrates subsequently hydrolyzed by HslV. HslU recognizes the N-terminal part of its protein substrates and unfolds these before they are guided to HslV for hydrolysis. This is ATP-dependent protease ATPase subunit HslU from Nitrosomonas eutropha (strain DSM 101675 / C91 / Nm57).